The sequence spans 179 residues: MTQKVGVLAIQGGYQKHADMFKSLGVEVKLVKFNNDFDSIDRLVIPGGESTTLLNLLNKHQIFDKLYNFCSSKPVFGTCAGSIVLSKGEGYLNLLDLEVQRNAYGRQVDSFVADISFNDKNITGVFIRAPKFIVVGNQVDILSKYQDSPVLLRQANILVSSFHPELTQDPTIHEYFLAM.

48-50 (GES) serves as a coordination point for L-glutamine. Cysteine 79 functions as the Nucleophile in the catalytic mechanism. L-glutamine contacts are provided by residues arginine 101 and 127–128 (IR). Residues histidine 163 and glutamate 165 each act as charge relay system in the active site.

Belongs to the glutaminase PdxT/SNO family. In the presence of PdxS, forms a dodecamer of heterodimers. Only shows activity in the heterodimer.

The catalysed reaction is aldehydo-D-ribose 5-phosphate + D-glyceraldehyde 3-phosphate + L-glutamine = pyridoxal 5'-phosphate + L-glutamate + phosphate + 3 H2O + H(+). It carries out the reaction L-glutamine + H2O = L-glutamate + NH4(+). The protein operates within cofactor biosynthesis; pyridoxal 5'-phosphate biosynthesis. Functionally, catalyzes the hydrolysis of glutamine to glutamate and ammonia as part of the biosynthesis of pyridoxal 5'-phosphate. The resulting ammonia molecule is channeled to the active site of PdxS. The polypeptide is Pyridoxal 5'-phosphate synthase subunit PdxT (Francisella tularensis subsp. novicida (strain U112)).